The following is a 400-amino-acid chain: Tryptophan synthase beta chain (400 aa).

Lys92 bears the N6-(pyridoxal phosphate)lysine mark.

The protein belongs to the TrpB family. As to quaternary structure, tetramer of two alpha and two beta chains. Pyridoxal 5'-phosphate serves as cofactor.

The enzyme catalyses (1S,2R)-1-C-(indol-3-yl)glycerol 3-phosphate + L-serine = D-glyceraldehyde 3-phosphate + L-tryptophan + H2O. The protein operates within amino-acid biosynthesis; L-tryptophan biosynthesis; L-tryptophan from chorismate: step 5/5. Its function is as follows. The beta subunit is responsible for the synthesis of L-tryptophan from indole and L-serine. This is Tryptophan synthase beta chain from Neisseria gonorrhoeae.